A 240-amino-acid chain; its full sequence is 1-(5-phosphoribosyl)-5-[(5-phosphoribosylamino)methylideneamino] imidazole-4-carboxamide isomerase (240 aa).

The active-site Proton acceptor is Asp8. The Proton donor role is filled by Asp129.

Belongs to the HisA/HisF family.

It is found in the cytoplasm. It carries out the reaction 1-(5-phospho-beta-D-ribosyl)-5-[(5-phospho-beta-D-ribosylamino)methylideneamino]imidazole-4-carboxamide = 5-[(5-phospho-1-deoxy-D-ribulos-1-ylimino)methylamino]-1-(5-phospho-beta-D-ribosyl)imidazole-4-carboxamide. Its pathway is amino-acid biosynthesis; L-histidine biosynthesis; L-histidine from 5-phospho-alpha-D-ribose 1-diphosphate: step 4/9. This is 1-(5-phosphoribosyl)-5-[(5-phosphoribosylamino)methylideneamino] imidazole-4-carboxamide isomerase from Listeria monocytogenes serotype 4a (strain HCC23).